Here is a 549-residue protein sequence, read N- to C-terminus: Putative acyl-CoA synthetase YngI (549 aa).

ATP is bound by residues threonine 198–lysine 206, aspartate 423, arginine 438, and lysine 529.

It belongs to the ATP-dependent AMP-binding enzyme family.

In Bacillus subtilis (strain 168), this protein is Putative acyl-CoA synthetase YngI (yngI).